The sequence spans 270 residues: 2-epi-5-epi-valiolone 7-phosphate 2-epimerase (270 aa).

Residues glutamate 143 and glutamate 236 each act as proton donor/acceptor in the active site.

Belongs to the hyi family.

It carries out the reaction 2-epi-5-epi-valiolone 7-phosphate = 5-epi-valiolone 7-phosphate. Functionally, involved in the biosynthesis of the alpha-glucosidase inhibitor acarbose. Catalyzes the 2-epimerisation of 2-epi-5-epivaliolone 7-phosphate to yield 5-epi-valiolone 7-phosphate. The protein is 2-epi-5-epi-valiolone 7-phosphate 2-epimerase (acbO) of Actinoplanes sp. (strain ATCC 31044 / CBS 674.73 / SE50/110).